A 582-amino-acid chain; its full sequence is ATP-dependent lipid A-core flippase (582 aa).

6 helical membrane passes run 23–43 (AAFI…TLFL), 61–81 (ILLY…SLNV), 140–160 (AVLV…LMFY), 163–183 (WQLS…VGVV), 247–267 (AIST…VLVI), and 273–293 (MLGE…IMLL). The region spanning 26-308 (IAAILCMIGY…LTNVNSDFQR (283 aa)) is the ABC transmembrane type-1 domain. An ABC transporter domain is found at 340–576 (IVFDDVTFSY…EGAYFQLHNL (237 aa)). 374 to 381 (GRSGSGKS) serves as a coordination point for ATP.

This sequence belongs to the ABC transporter superfamily. Lipid exporter (TC 3.A.1.106) family. Homodimer.

It is found in the cell inner membrane. It carries out the reaction ATP + H2O + lipid A-core oligosaccharideSide 1 = ADP + phosphate + lipid A-core oligosaccharideSide 2.. Functionally, involved in lipopolysaccharide (LPS) biosynthesis. Translocates lipid A-core from the inner to the outer leaflet of the inner membrane. Transmembrane domains (TMD) form a pore in the inner membrane and the ATP-binding domain (NBD) is responsible for energy generation. In Idiomarina loihiensis (strain ATCC BAA-735 / DSM 15497 / L2-TR), this protein is ATP-dependent lipid A-core flippase.